Consider the following 139-residue polypeptide: Small ribosomal subunit protein bS16 (139 aa).

Residues 85-108 (ESKSGKKPAKKATTKEASAKKPTD) are disordered. The span at 97–108 (TTKEASAKKPTD) shows a compositional bias: basic and acidic residues.

Belongs to the bacterial ribosomal protein bS16 family.

The polypeptide is Small ribosomal subunit protein bS16 (Leuconostoc mesenteroides subsp. mesenteroides (strain ATCC 8293 / DSM 20343 / BCRC 11652 / CCM 1803 / JCM 6124 / NCDO 523 / NBRC 100496 / NCIMB 8023 / NCTC 12954 / NRRL B-1118 / 37Y)).